Consider the following 179-residue polypeptide: Zinc finger HIT domain-containing protein 3 (179 aa).

Zn(2+) is bound by residues C11, C14, C22, C25, C30, C34, H38, and C49. An HIT-type zinc finger spans residues 11–49 (CVVCLEKPKYRCPACRVPYCSLPCFRKHKAPPLQQLPVC). Position 104 is a phosphoserine (S104).

Thyroid receptor interacting proteins (TRIPs) specifically interact with the ligand binding domain of the thyroid receptor (TR). Requires the presence of thyroid hormone for its interaction. Interacts with NUFIP1. Interacts (via HIT-type zinc finger) with the RUVBL1/RUVBL2 complex in the presence of ADP.

It localises to the cytoplasm. Its subcellular location is the nucleus. The chain is Zinc finger HIT domain-containing protein 3 (ZNHIT3) from Bos taurus (Bovine).